The sequence spans 359 residues: Fructose-bisphosphate aldolase class 2 (359 aa).

Lysine 9 bears the N6-acetyllysine mark. Position 62 (serine 62) interacts with D-glyceraldehyde 3-phosphate. The active-site Proton donor is the aspartate 110. Zn(2+) is bound by residues histidine 111, aspartate 145, glutamate 175, and histidine 227. A dihydroxyacetone phosphate-binding site is contributed by glycine 228. Histidine 265 provides a ligand contact to Zn(2+). Dihydroxyacetone phosphate-binding positions include 266-268 (GGS) and 287-290 (NIDT).

This sequence belongs to the class II fructose-bisphosphate aldolase family. In terms of assembly, homodimer. The cofactor is Zn(2+).

It catalyses the reaction beta-D-fructose 1,6-bisphosphate = D-glyceraldehyde 3-phosphate + dihydroxyacetone phosphate. It participates in carbohydrate degradation; glycolysis; D-glyceraldehyde 3-phosphate and glycerone phosphate from D-glucose: step 4/4. Functionally, catalyzes the aldol condensation of dihydroxyacetone phosphate (DHAP or glycerone-phosphate) with glyceraldehyde 3-phosphate (G3P) to form fructose 1,6-bisphosphate (FBP) in gluconeogenesis and the reverse reaction in glycolysis. The protein is Fructose-bisphosphate aldolase class 2 (fbaA) of Escherichia coli O157:H7.